Here is a 142-residue protein sequence, read N- to C-terminus: Large ribosomal subunit protein uL11 (142 aa).

The protein belongs to the universal ribosomal protein uL11 family. As to quaternary structure, part of the ribosomal stalk of the 50S ribosomal subunit. Interacts with L10 and the large rRNA to form the base of the stalk. L10 forms an elongated spine to which L12 dimers bind in a sequential fashion forming a multimeric L10(L12)X complex. One or more lysine residues are methylated.

Forms part of the ribosomal stalk which helps the ribosome interact with GTP-bound translation factors. This chain is Large ribosomal subunit protein uL11, found in Nitrobacter winogradskyi (strain ATCC 25391 / DSM 10237 / CIP 104748 / NCIMB 11846 / Nb-255).